The sequence spans 4485 residues: Dynein gamma chain, flagellar outer arm (4485 aa).

Positions 1–1780 (MALDNRHRLI…IISICDVDFE (1780 aa)) are stem. Coiled coils occupy residues 449–469 (IEGLDTMLKSLNNIIDDVKRK), 804–838 (VEQNRFQKKQAELLAIRNEEVRRAIEDLYTLVRNY), 1093–1114 (VRNVMAVLKEVREKESEIDNLI), 1275–1297 (DVVEKIDEMGEQVQQYQNQSKKL), and 1699–1727 (KKVDALLRDMVNITVRLDLTKNQRTNLET). AAA regions lie at residues 1781–2002 (YSFE…VLRT), 2061–2279 (KDAE…ISLK), 2384–2638 (TYPK…VFQG), and 2763–3013 (KFNE…YRRY). ATP contacts are provided by residues 1819 to 1826 (GPAGTGKT), 2099 to 2106 (GPSGSGKS), 2425 to 2432 (GGPGTAKT), and 2802 to 2809 (GVGGSGKQ). Coiled coils occupy residues 3077 to 3099 (AKEAEALLKQISESTAIAEKEKQ), 3196 to 3227 (EAQKMMNQMSFLQDLKDFAKEQINDETVELLE), 3265 to 3343 (KVVE…LAGE), and 3569 to 3663 (EDQL…EEYR). Positions 3077 to 3343 (AKEAEALLKQ…NALIGALAGE (267 aa)) are stalk. 2 AAA regions span residues 3412 to 3643 (LVDD…DVSE) and 3857 to 4071 (AADY…FLQN).

Belongs to the dynein heavy chain family. As to quaternary structure, consists of at least 3 heavy chains (alpha, beta and gamma), 2 intermediate chains and 8 light chains.

Its subcellular location is the cell projection. It is found in the cilium. The protein resides in the flagellum. It localises to the cytoplasm. The protein localises to the cytoskeleton. Its subcellular location is the flagellum axoneme. Its function is as follows. Force generating protein of eukaryotic cilia and flagella. Produces force towards the minus ends of microtubules. Dynein has ATPase activity; the force-producing power stroke is thought to occur on release of ADP. The sequence is that of Dynein gamma chain, flagellar outer arm (ODA2) from Chlamydomonas reinhardtii (Chlamydomonas smithii).